Reading from the N-terminus, the 470-residue chain is tRNA modification GTPase MnmE (470 aa).

Residues Lys-27, Glu-90, and Arg-129 each contribute to the (6S)-5-formyl-5,6,7,8-tetrahydrofolate site. A TrmE-type G domain is found at 231–391 (GVSLVLAGKP…LRDFLNQRFL (161 aa)). Residues 241–246 (NVGKSS), 260–266 (TPFPGTT), and 285–288 (DTAG) each bind GTP. The Mg(2+) site is built by Ser-245 and Thr-266. Lys-470 is a binding site for (6S)-5-formyl-5,6,7,8-tetrahydrofolate.

Belongs to the TRAFAC class TrmE-Era-EngA-EngB-Septin-like GTPase superfamily. TrmE GTPase family. Homodimer. Heterotetramer of two MnmE and two MnmG subunits. Requires K(+) as cofactor.

The protein resides in the cytoplasm. Its function is as follows. Exhibits a very high intrinsic GTPase hydrolysis rate. Involved in the addition of a carboxymethylaminomethyl (cmnm) group at the wobble position (U34) of certain tRNAs, forming tRNA-cmnm(5)s(2)U34. The polypeptide is tRNA modification GTPase MnmE (Syntrophobacter fumaroxidans (strain DSM 10017 / MPOB)).